The chain runs to 413 residues: Putative F-box/kelch-repeat protein At4g22430 (413 aa).

Residues Asn-5–Leu-54 form the F-box domain. Residues Asn-168–Leu-210 form a Kelch repeat.

This Arabidopsis thaliana (Mouse-ear cress) protein is Putative F-box/kelch-repeat protein At4g22430.